The chain runs to 296 residues: Glycine--tRNA ligase alpha subunit (296 aa).

This sequence belongs to the class-II aminoacyl-tRNA synthetase family. As to quaternary structure, tetramer of two alpha and two beta subunits.

The protein resides in the cytoplasm. The catalysed reaction is tRNA(Gly) + glycine + ATP = glycyl-tRNA(Gly) + AMP + diphosphate. The polypeptide is Glycine--tRNA ligase alpha subunit (Francisella tularensis subsp. novicida (strain U112)).